A 287-amino-acid chain; its full sequence is Oxaloacetate decarboxylase (287 aa).

Substrate is bound at residue Ser50. Asp88 contributes to the Mg(2+) binding site. 2 residues coordinate substrate: Arg159 and His235.

This sequence belongs to the isocitrate lyase/PEP mutase superfamily. Oxaloacetate decarboxylase family. Homotetramer; dimer of dimers. It depends on Mg(2+) as a cofactor.

The catalysed reaction is oxaloacetate + H(+) = pyruvate + CO2. Its function is as follows. Catalyzes the decarboxylation of oxaloacetate into pyruvate. Seems to play a role in maintaining cellular concentrations of bicarbonate and pyruvate. This chain is Oxaloacetate decarboxylase, found in Pseudomonas paraeruginosa (strain DSM 24068 / PA7) (Pseudomonas aeruginosa (strain PA7)).